We begin with the raw amino-acid sequence, 272 residues long: Phosphoglycolate phosphatase (272 aa).

The Nucleophile role is filled by Asp-19. Mg(2+)-binding residues include Asp-19, Asp-21, and Asp-182.

Belongs to the HAD-like hydrolase superfamily. CbbY/CbbZ/Gph/YieH family. It depends on Mg(2+) as a cofactor.

It catalyses the reaction 2-phosphoglycolate + H2O = glycolate + phosphate. Its pathway is organic acid metabolism; glycolate biosynthesis; glycolate from 2-phosphoglycolate: step 1/1. Its function is as follows. Specifically catalyzes the dephosphorylation of 2-phosphoglycolate. Is involved in the dissimilation of the intracellular 2-phosphoglycolate formed during the DNA repair of 3'-phosphoglycolate ends, a major class of DNA lesions induced by oxidative stress. This is Phosphoglycolate phosphatase from Pseudomonas fluorescens (strain ATCC BAA-477 / NRRL B-23932 / Pf-5).